The sequence spans 1529 residues: MVKSPCSPVTTGKKRCRAKPQKKDEDTTDKGKLDEGPLDATKEMNGVGKGDSRAACKRPRRAAACSDFKEKSVRLSDKSSVVATNGNKMEEEEMDAVKLTKLGPEVQRPCRKLIDFILHDADGKLQPFEMSEIDDFFITALIMPMDDDLEKDRQKGVRCEGFGRIEDWAISGYDEGTAVVWVSTEVADYECVKPAGNYKSYYDHFYEKAQVCVEVYRKLARSVGGNPNLGLEELLASVVRSINAIKGYSGTLSKDFVISNGEFVYNQLIGLDETANTDDEKFATLPVLLALRDGCKSRVEVSKLQPNISNGSLKINDAECKEVSEDDDEKLARLLQQEEEWKMMKQRGKRGTTSQKNVYIKISEAEIANDYPLPAYYKPSSQEMDEYIFDSEDSFYSDVPVRILNNWALYNADSRLIPLELIPMKAGAENDIVVFGSGFMREDDGSCCSTAESAKLSSSSSSNHQDAGVSIYLSPIKEWVIEFGGSMICITIRTDVAWYKLRQPTKQYAPWCEPVLKTARLSVSIITLLKEQSRASKLSFADVIKKVAEFDKGSPAFVSSNVALVERYIVVHGQIILQQFSDFPDETIRRSAFATGLLMKMEQRRHTKLVMKKKVQVMRGENLNPSATMGPASRRKVMRATTTRLINRIWSDYYTHHFPEDSKDADVNEAKEIDDELEENEDEDAEEEAQIEEENVSKTPPSTRSRKLVSQTCKEIRWEGEAIGKTPSGEALYKCAYVRELRINLGRTVALEDDSGELVMCFVEYMFQKLNGAKMVHGRLLQKGSETVLGNAANERDLFLTNECLEFELEDIKELMSVNLQSLPWGHKYRKENAEADRIERAKAEDRKKKGLPMEYLCKSLYWPEKGAFFSLPHDKLGLGNGFCSSCQQKEPDCDELQILSKNSFIYRNITYNVNDYLYIRPDFFSQEEDRATFKGGRNVGLKPYVVCHLLDVHEPAGSRKIHPASTKISVRRFYRPDDISSAKAYVSDIREVYYSENIVKVPVDMIEGKCEVKKKIDISNSDVPVMVEHEFFCEHFYDPATGALKQLPPNVKLMSVQQKATGALKKNKGKQICESDQVDSDKCTKVSKENRLATLDIFAGCGGLSEGLQQAGVSFTKWAIEYEEPAGEAFTKNHPEAAVFVDNCNVILKAIMDKCGDADDCISTSEAAEQAAKFSQDNIMNLPVPGEVEFINGGPPCQGFSGMNRFNQSPWSKVQCEMILAFLSFAEYFRPRFFLLENVRNFVSFNKGQTFRLTVASLLEMGYQVRFGILEAGTFGVAQSRKRAFIWAAAPGETLPDWPEPMHVFASPELKINLPDGKYYAAAKSTAGGAPFRAITVRDTIGDLPKVENGASKLLLEYGGEPISWFQKKIRGNTIALNDHISKEMNELNLIRCQRIPKRPGCDWHDLPDEKVKLSSGQLVDLIPWCLPNTAKRHNQWKGLYGRLDWEGNFPTSVTDPQPMGKVGMCFHPDQDRIITVRECARSQGFPDNYQFAGNIQSKHRQIGNAVPPPLAFALGRKLKEAVDAKRQ.

Disordered regions lie at residues 1–56 (MVKS…RAAC) and 674–706 (DDEL…TRSR). Residues 21–35 (QKKDEDTTDKGKLDE) are compositionally biased toward basic and acidic residues. The segment covering 674 to 694 (DDELEENEDEDAEEEAQIEEE) has biased composition (acidic residues). The span at 697-706 (SKTPPSTRSR) shows a compositional bias: polar residues. 2 BAH domains span residues 741 to 873 (LRIN…FSLP) and 910 to 1049 (ITYN…KQLP). In terms of domain architecture, SAM-dependent MTase C5-type spans 1093–1527 (LATLDIFAGC…RKLKEAVDAK (435 aa)). The active site involves Cys1198.

The protein belongs to the class I-like SAM-binding methyltransferase superfamily. C5-methyltransferase family. As to expression, expressed in roots and inflorescences. Expressed in roots, panicles, anthers, pistils, endosperm and imbibed embryos. Expressed in tissues containing actively replicating and dividing cells, such as shoot and root meristems.

The protein localises to the nucleus. It catalyses the reaction a 2'-deoxycytidine in DNA + S-adenosyl-L-methionine = a 5-methyl-2'-deoxycytidine in DNA + S-adenosyl-L-homocysteine + H(+). In terms of biological role, major CG methylase that methylates chromatin CpG residues and maintains DNA methylation. Plays a major role in genomic imprinting, regulation of embryogenesis and seed viability. Maintains DNA methylation at the FIE1 gene locus in the embryo. The sequence is that of DNA (cytosine-5)-methyltransferase 1B (MET1B) from Oryza sativa subsp. japonica (Rice).